A 289-amino-acid chain; its full sequence is Probable early E4 33 kDa protein (289 aa).

The protein belongs to the adenoviridae E4 30 to 34 kDa protein family. As to quaternary structure, interacts with E1B-55k.

It is found in the host nucleus. The protein localises to the host cytoplasm. Functionally, plays a major role to prevent cellular inhibition of viral genome replication by nuclear bodies. Assembles an SCF-like E3 ubiquitin ligase complex based on the cellular proteins ELOB, ELOC, CUL5 and RBX1, in cooperation with viral E1B-55K. This viral RING-type ligase ubiquitinates cellular substrates prior to proteasomal degradation: p53/TP53, LIG4, MRE11-RAD50-NBS1 (MRN) complex, ITGA3, DAXX and BLM. The protein is Probable early E4 33 kDa protein of Mus musculus (Mouse).